Here is a 197-residue protein sequence, read N- to C-terminus: Ras-related protein RabG2 (197 aa).

GTP-binding positions include 13–20 (GDSAVGKT), 61–65 (DTAGQ), and 119–122 (NKCD). The interval 175–197 (SKPSVVNPGSGGTSNTGGKKKFC) is disordered. Cys-197 carries the S-geranylgeranyl cysteine lipid modification.

Belongs to the small GTPase superfamily. Rab family.

The protein localises to the cell membrane. The polypeptide is Ras-related protein RabG2 (rabG2) (Dictyostelium discoideum (Social amoeba)).